The following is a 602-amino-acid chain: Elongation factor 4 (602 aa).

The region spanning Lys7–Asp189 is the tr-type G domain. GTP contacts are provided by residues Asp19 to Thr24 and Asn136 to Asp139.

It belongs to the TRAFAC class translation factor GTPase superfamily. Classic translation factor GTPase family. LepA subfamily.

Its subcellular location is the cell membrane. It catalyses the reaction GTP + H2O = GDP + phosphate + H(+). Its function is as follows. Required for accurate and efficient protein synthesis under certain stress conditions. May act as a fidelity factor of the translation reaction, by catalyzing a one-codon backward translocation of tRNAs on improperly translocated ribosomes. Back-translocation proceeds from a post-translocation (POST) complex to a pre-translocation (PRE) complex, thus giving elongation factor G a second chance to translocate the tRNAs correctly. Binds to ribosomes in a GTP-dependent manner. The chain is Elongation factor 4 from Clostridium botulinum (strain 657 / Type Ba4).